Reading from the N-terminus, the 108-residue chain is Replication restart protein PriB (108 aa).

Residues 8–108 form the SSB domain; sequence VDNRFSLIGK…LHAEQIEFIE (101 aa).

The protein belongs to the PriB family. In terms of assembly, homodimer. Interacts with PriA and DnaT. Component of the replication restart primosome. Primosome assembly occurs via a 'hand-off' mechanism. PriA binds to replication forks, subsequently PriB then DnaT bind; DnaT then displaces ssDNA to generate the helicase loading substrate.

Its function is as follows. Involved in the restart of stalled replication forks, which reloads the replicative helicase on sites other than the origin of replication; the PriA-PriB pathway is the major replication restart pathway. During primosome assembly it facilitates complex formation between PriA and DnaT on DNA; stabilizes PriA on DNA. Stimulates the DNA unwinding activity of PriA helicase. In Histophilus somni (strain 129Pt) (Haemophilus somnus), this protein is Replication restart protein PriB.